The chain runs to 135 residues: Small ribosomal subunit protein uS8 (135 aa).

The protein belongs to the universal ribosomal protein uS8 family. In terms of assembly, part of the 30S ribosomal subunit. Contacts proteins S5 and S12.

Its function is as follows. One of the primary rRNA binding proteins, it binds directly to 16S rRNA central domain where it helps coordinate assembly of the platform of the 30S subunit. In Nocardioides sp. (strain ATCC BAA-499 / JS614), this protein is Small ribosomal subunit protein uS8.